We begin with the raw amino-acid sequence, 176 residues long: Large ribosomal subunit protein uL6 (176 aa).

This sequence belongs to the universal ribosomal protein uL6 family. As to quaternary structure, part of the 50S ribosomal subunit.

Its function is as follows. This protein binds to the 23S rRNA, and is important in its secondary structure. It is located near the subunit interface in the base of the L7/L12 stalk, and near the tRNA binding site of the peptidyltransferase center. In Paraburkholderia phymatum (strain DSM 17167 / CIP 108236 / LMG 21445 / STM815) (Burkholderia phymatum), this protein is Large ribosomal subunit protein uL6.